Here is a 323-residue protein sequence, read N- to C-terminus: Transmembrane protein 59 (323 aa).

A signal peptide spans 1–35; that stretch reads MAAPKGSLWVRTQLGLPPLLLLTMALAGGSGTASA. The Extracellular segment spans residues 36–238; it reads EAFDSVLGDT…GFLRCLSLNS (203 aa). N-linked (GlcNAc...) asparagine glycosylation occurs at N90. A helical membrane pass occupies residues 239 to 259; sequence GWILTTTLVLSVMVLLWICCA. At 260–323 the chain is on the cytoplasmic side; it reads TVATAVEQYV…TKVNLAHSEI (64 aa). Positions 263-281 match the ATG16L1-binding motif motif; it reads TAVEQYVPSEKLSIYGDLE. The residue at position 303 (T303) is a Phosphothreonine.

The protein belongs to the TMEM59 family. Interacts with ATG16L1 (via WD repeats). In terms of processing, N-glycosylated.

It is found in the late endosome membrane. It localises to the lysosome membrane. Its subcellular location is the cell membrane. The protein localises to the golgi apparatus membrane. In terms of biological role, acts as a regulator of autophagy in response to S.aureus infection by promoting activation of LC3 (MAP1LC3A, MAP1LC3B or MAP1LC3C). Acts by interacting with ATG16L1, leading to promote a functional complex between LC3 and ATG16L1 and promoting LC3 lipidation and subsequent activation of autophagy. Modulates the O-glycosylation and complex N-glycosylation steps occurring during the Golgi maturation of several proteins such as APP, BACE1, SEAP or PRNP. Inhibits APP transport to the cell surface and further shedding. The sequence is that of Transmembrane protein 59 (TMEM59) from Homo sapiens (Human).